Consider the following 87-residue polypeptide: Small ribosomal subunit protein bS20 (87 aa).

The interval 1–21 (MANIKQQIKRNKTNEKRRLKN) is disordered. A compositionally biased stretch (basic residues) spans 7-20 (QIKRNKTNEKRRLK).

The protein belongs to the bacterial ribosomal protein bS20 family.

Binds directly to 16S ribosomal RNA. The chain is Small ribosomal subunit protein bS20 from Phytoplasma mali (strain AT).